A 131-amino-acid chain; its full sequence is C-type natriuretic peptide (131 aa).

An N-terminal signal peptide occupies residues 1 to 20 (MMCKALVFAVLLLAVPLERA). A propeptide spanning residues 21–109 (DSRALRTPVD…KRALPDRAKR (89 aa)) is cleaved from the precursor. An intrachain disulfide couples C115 to C131.

It belongs to the natriuretic peptide family. In terms of tissue distribution, highly expressed in brain and liver, and moderately in gut, gills and heart. Expressed to a low level in atrium, ventricle and liver of fresh water eels.

It is found in the secreted. In terms of biological role, hormone which plays a role in endochondral ossification through regulation of cartilaginous growth plate chondrocytes proliferation and differentiation. May also be vasoactive and natriuretic. May be important for freshwater adaptation. The polypeptide is C-type natriuretic peptide (cnp) (Anguilla japonica (Japanese eel)).